The following is a 311-amino-acid chain: 4-hydroxy-tetrahydrodipicolinate synthase (311 aa).

Position 51 (Thr51) interacts with pyruvate. The active-site Proton donor/acceptor is the Tyr140. The active-site Schiff-base intermediate with substrate is Lys168. Ile209 contacts pyruvate.

The protein belongs to the DapA family. Homotetramer; dimer of dimers.

It localises to the cytoplasm. It catalyses the reaction L-aspartate 4-semialdehyde + pyruvate = (2S,4S)-4-hydroxy-2,3,4,5-tetrahydrodipicolinate + H2O + H(+). It functions in the pathway amino-acid biosynthesis; L-lysine biosynthesis via DAP pathway; (S)-tetrahydrodipicolinate from L-aspartate: step 3/4. Its function is as follows. Catalyzes the condensation of (S)-aspartate-beta-semialdehyde [(S)-ASA] and pyruvate to 4-hydroxy-tetrahydrodipicolinate (HTPA). The chain is 4-hydroxy-tetrahydrodipicolinate synthase from Streptococcus pneumoniae (strain 70585).